We begin with the raw amino-acid sequence, 257 residues long: Triosephosphate isomerase (257 aa).

Substrate contacts are provided by Asn-11 and Lys-13. Residue His-96 is the Electrophile of the active site. Glu-170 functions as the Proton acceptor in the catalytic mechanism.

This sequence belongs to the triosephosphate isomerase family. As to quaternary structure, homodimer.

The protein resides in the cytoplasm. It catalyses the reaction D-glyceraldehyde 3-phosphate = dihydroxyacetone phosphate. It carries out the reaction dihydroxyacetone phosphate = methylglyoxal + phosphate. It functions in the pathway carbohydrate biosynthesis; gluconeogenesis. Its pathway is carbohydrate degradation; glycolysis; D-glyceraldehyde 3-phosphate from glycerone phosphate: step 1/1. Triosephosphate isomerase is an extremely efficient metabolic enzyme that catalyzes the interconversion between dihydroxyacetone phosphate (DHAP) and D-glyceraldehyde-3-phosphate (G3P) in glycolysis and gluconeogenesis. Functionally, it is also responsible for the non-negligible production of methylglyoxal a reactive cytotoxic side-product that modifies and can alter proteins, DNA and lipids. This chain is Triosephosphate isomerase, found in Giardia intestinalis (Giardia lamblia).